A 100-amino-acid polypeptide reads, in one-letter code: Biogenesis of lysosome-related organelles complex 1 subunit CNL1 (100 aa).

Residues serine 25–valine 46 are a coiled coil.

It belongs to the BLOC1S4 family. In terms of assembly, component of the biogenesis of lysosome-related organelles complex-1 (BLOC-1).

Its subcellular location is the cytoplasm. Functionally, component of the biogenesis of lysosome-related organelles complex-1 (BLOC-1), a complex that is involved in endosomal cargo sorting. This Candida glabrata (strain ATCC 2001 / BCRC 20586 / JCM 3761 / NBRC 0622 / NRRL Y-65 / CBS 138) (Yeast) protein is Biogenesis of lysosome-related organelles complex 1 subunit CNL1 (CLN1).